A 377-amino-acid polypeptide reads, in one-letter code: tRNA-specific 2-thiouridylase MnmA (377 aa).

ATP contacts are provided by residues 8 to 15 and Met-34; that span reads GMSGGVDS. The tract at residues 94–96 is interaction with target base in tRNA; sequence NPD. The Nucleophile role is filled by Cys-99. Cysteines 99 and 201 form a disulfide. Residue Gly-123 participates in ATP binding. An interaction with tRNA region spans residues 151–153; that stretch reads KDQ. Cys-201 acts as the Cysteine persulfide intermediate in catalysis. Positions 315–316 are interaction with tRNA; sequence RY.

This sequence belongs to the MnmA/TRMU family.

Its subcellular location is the cytoplasm. It catalyses the reaction S-sulfanyl-L-cysteinyl-[protein] + uridine(34) in tRNA + AH2 + ATP = 2-thiouridine(34) in tRNA + L-cysteinyl-[protein] + A + AMP + diphosphate + H(+). Catalyzes the 2-thiolation of uridine at the wobble position (U34) of tRNA, leading to the formation of s(2)U34. This is tRNA-specific 2-thiouridylase MnmA from Acinetobacter baylyi (strain ATCC 33305 / BD413 / ADP1).